We begin with the raw amino-acid sequence, 386 residues long: L-lactate dehydrogenase (386 aa).

One can recognise an FMN hydroxy acid dehydrogenase domain in the interval 1-380; sequence MIISAASDYR…SGDALSRVTR (380 aa). Tyr-24 provides a ligand contact to substrate. Residues Ser-106 and Gln-127 each contribute to the FMN site. Residue Tyr-129 coordinates substrate. Residue Thr-155 participates in FMN binding. Residue Arg-164 coordinates substrate. FMN is bound at residue Lys-251. The active-site Proton acceptor is His-275. Substrate is bound at residue Arg-278. 306–330 contributes to the FMN binding site; it reads DSGIRSGLDVVRMLALGADAVLLGR.

This sequence belongs to the FMN-dependent alpha-hydroxy acid dehydrogenase family. Requires FMN as cofactor.

The protein localises to the cell inner membrane. It catalyses the reaction (S)-lactate + A = pyruvate + AH2. Its function is as follows. Catalyzes the conversion of L-lactate to pyruvate. Is coupled to the respiratory chain. The protein is L-lactate dehydrogenase of Xanthomonas campestris pv. campestris (strain 8004).